A 318-amino-acid polypeptide reads, in one-letter code: Na(+)-translocating ferredoxin:NAD(+) oxidoreductase complex subunit D (318 aa).

3 helical membrane passes run 35–55 (LAVA…ICVI), 77–99 (WSAV…WWIG), and 114–134 (FGGL…FLLA). Threonine 156 bears the FMN phosphoryl threonine mark. Helical transmembrane passes span 182-202 (VYGC…LYLI), 206-226 (IISW…ALLV), and 261-281 (IIYA…GGYP).

The protein belongs to the NqrB/RnfD family. The complex is composed of six subunits: RnfA, RnfB, RnfC, RnfD, RnfE and RnfG. It depends on FMN as a cofactor.

The protein localises to the cell membrane. The catalysed reaction is 2 reduced [2Fe-2S]-[ferredoxin] + Na(+)(in) + NAD(+) + H(+) = 2 oxidized [2Fe-2S]-[ferredoxin] + Na(+)(out) + NADH. In terms of biological role, part of a membrane-bound complex that couples electron transfer with translocation of ions across the membrane. Couples electron transfer from reduced ferredoxin to NAD(+) with electrogenic movement of Na(+) out of the cell. Involved in caffeate respiration. The polypeptide is Na(+)-translocating ferredoxin:NAD(+) oxidoreductase complex subunit D (Acetobacterium woodii (strain ATCC 29683 / DSM 1030 / JCM 2381 / KCTC 1655 / WB1)).